A 476-amino-acid polypeptide reads, in one-letter code: Probable secreted beta-glucosidase SIM1 (476 aa).

The first 19 residues, 1-19 (MKFSTAVTTLISSGAIVSA), serve as a signal peptide directing secretion. Positions 111–203 (ATASTSQGAS…SSSSSSSGSG (93 aa)) are enriched in low complexity. Residues 111–214 (ATASTSQGAS…IYGDLADFSG (104 aa)) are disordered. Residue Asn423 is glycosylated (N-linked (GlcNAc...) asparagine).

This sequence belongs to the SUN family.

The protein localises to the secreted. The protein resides in the cell wall. In terms of biological role, involved in the remodeling of the cell wall during the various phases of yeast culture development and under various environmental conditions. Required for the maintenance of the CLB5 kinase activity. This chain is Probable secreted beta-glucosidase SIM1 (SIM1), found in Saccharomyces cerevisiae (strain ATCC 204508 / S288c) (Baker's yeast).